The sequence spans 186 residues: ATP-dependent protease subunit HslV (186 aa).

The active site involves Thr-14. Residues Ala-168, Cys-171, and Thr-174 each coordinate Na(+).

This sequence belongs to the peptidase T1B family. HslV subfamily. In terms of assembly, a double ring-shaped homohexamer of HslV is capped on each side by a ring-shaped HslU homohexamer. The assembly of the HslU/HslV complex is dependent on binding of ATP.

It is found in the cytoplasm. The catalysed reaction is ATP-dependent cleavage of peptide bonds with broad specificity.. Allosterically activated by HslU binding. Its function is as follows. Protease subunit of a proteasome-like degradation complex believed to be a general protein degrading machinery. The sequence is that of ATP-dependent protease subunit HslV from Bradyrhizobium sp. (strain BTAi1 / ATCC BAA-1182).